The primary structure comprises 403 residues: JmjC domain-containing histone demethylation protein 1 (403 aa).

The region spanning 141-328 (WSLREWCNYF…QQLKIVDVEK (188 aa)) is the JmjC domain. Thr221 serves as a coordination point for substrate. Fe cation contacts are provided by His224 and Asp226. Lys241 is a binding site for substrate. His296 provides a ligand contact to Fe cation.

The protein belongs to the JHDM1 histone demethylase family. Fe(2+) is required as a cofactor.

The protein localises to the nucleus. It catalyses the reaction N(6),N(6)-dimethyl-L-lysyl(36)-[histone H3] + 2 2-oxoglutarate + 2 O2 = L-lysyl(36)-[histone H3] + 2 formaldehyde + 2 succinate + 2 CO2. Histone demethylase that specifically demethylates 'Lys-36' of histone H3, thereby playing a central role in histone code. In Candida glabrata (strain ATCC 2001 / BCRC 20586 / JCM 3761 / NBRC 0622 / NRRL Y-65 / CBS 138) (Yeast), this protein is JmjC domain-containing histone demethylation protein 1 (JHD1).